Consider the following 150-residue polypeptide: Ribonuclease H (150 aa).

One can recognise an RNase H type-1 domain in the interval G3–A144. The Mg(2+) site is built by D12, E50, D72, and D136.

Belongs to the RNase H family. Monomer. It depends on Mg(2+) as a cofactor.

The protein localises to the cytoplasm. It carries out the reaction Endonucleolytic cleavage to 5'-phosphomonoester.. Functionally, endonuclease that specifically degrades the RNA of RNA-DNA hybrids. This chain is Ribonuclease H, found in Parvibaculum lavamentivorans (strain DS-1 / DSM 13023 / NCIMB 13966).